We begin with the raw amino-acid sequence, 451 residues long: 3-phosphoshikimate 1-carboxyvinyltransferase (451 aa).

Residues Lys-38, Ser-39, and Arg-43 each contribute to the 3-phosphoshikimate site. Lys-38 contributes to the phosphoenolpyruvate binding site. 2 residues coordinate phosphoenolpyruvate: Gly-111 and Arg-140. 3-phosphoshikimate contacts are provided by Ser-185, Gln-187, Asp-335, and Lys-362. Gln-187 lines the phosphoenolpyruvate pocket. Residue Asp-335 is the Proton acceptor of the active site. Phosphoenolpyruvate contacts are provided by Arg-366 and Arg-408.

It belongs to the EPSP synthase family. Monomer.

Its subcellular location is the cytoplasm. It carries out the reaction 3-phosphoshikimate + phosphoenolpyruvate = 5-O-(1-carboxyvinyl)-3-phosphoshikimate + phosphate. Its pathway is metabolic intermediate biosynthesis; chorismate biosynthesis; chorismate from D-erythrose 4-phosphate and phosphoenolpyruvate: step 6/7. Functionally, catalyzes the transfer of the enolpyruvyl moiety of phosphoenolpyruvate (PEP) to the 5-hydroxyl of shikimate-3-phosphate (S3P) to produce enolpyruvyl shikimate-3-phosphate and inorganic phosphate. This Crocosphaera subtropica (strain ATCC 51142 / BH68) (Cyanothece sp. (strain ATCC 51142)) protein is 3-phosphoshikimate 1-carboxyvinyltransferase.